The following is a 951-amino-acid chain: Protocadherin-20 (951 aa).

Positions 1–60 (MRGRGNARSSQALGVSWCPATWHPRLDMGRLHRPRSSTSYRNLPHLFLFFLFVGPFSCLG) are cleaved as a signal peptide. Residues 61–890 (SYSRATELLY…VESVSCMPTL (830 aa)) are Extracellular-facing. Cadherin domains are found at residues 64–209 (RATE…APQF), 210–320 (PVSQ…CPLF), 321–535 (TDSQ…APIF), 536–639 (LQPL…SPRF), 640–742 (INKD…PPLV), and 746–863 (QSNM…EPEI). A glycan (N-linked (GlcNAc...) asparagine) is linked at Asn-135. N-linked (GlcNAc...) asparagine glycosylation is found at Asn-326 and Asn-332. N-linked (GlcNAc...) asparagine glycosylation is found at Asn-680, Asn-748, Asn-803, Asn-844, and Asn-849. Residues 891 to 911 (VALSVISLGSITLVTGMGIYI) form a helical membrane-spanning segment. The Cytoplasmic segment spans residues 912–951 (CLRKGEKHPREDENLEVQIPLKGKIDLHMRERKPMDISNI).

It localises to the cell membrane. Its function is as follows. Potential calcium-dependent cell-adhesion protein. This is Protocadherin-20 (PCDH20) from Homo sapiens (Human).